The sequence spans 689 residues: Beta-adrenergic receptor kinase 1 (689 aa).

Positions 1 to 190 (MADLEAVLAD…ELNIHLTMND (190 aa)) are N-terminal. Residues 54 to 175 (TFEKIFSQKL…IESDKFTRFC (122 aa)) enclose the RGS domain. In terms of domain architecture, Protein kinase spans 191 to 453 (FSVHRIIGRG…AQEVKESPFF (263 aa)). Residues 197-205 (IGRGGFGEV) and Lys-220 each bind ATP. Asp-317 functions as the Proton acceptor in the catalytic mechanism. One can recognise an AGC-kinase C-terminal domain in the interval 454–521 (RSLDWQMVFL…TISERWQQEV (68 aa)). In terms of domain architecture, PH spans 558–652 (DCIVHGYMSK…WKKELRDAYR (95 aa)). At Ser-670 the chain carries Phosphoserine.

This sequence belongs to the protein kinase superfamily. AGC Ser/Thr protein kinase family. GPRK subfamily. Interacts with the heterodimer formed by GNB1 and GNG2. Interacts with GIT1. Interacts with, and phosphorylates chemokine-stimulated CCR5. Interacts with ARRB1. Interacts with LPAR1 and LPAR2. Interacts with RALA in response to LPAR1 activation. ADRBK1 and RALA mutually inhibit each other's binding to LPAR1. Interacts with ADRB2.

Its subcellular location is the cytoplasm. It is found in the cell membrane. It localises to the postsynapse. The protein resides in the presynapse. The enzyme catalyses [beta-adrenergic receptor] + ATP = [beta-adrenergic receptor]-phosphate + ADP + H(+). Its activity is regulated as follows. In contrast to other AGC family kinases, the catalytic activity is solely regulated by the binding of substrates and ligands, not by phosphorylation of the kinase domain. Its function is as follows. Specifically phosphorylates the agonist-occupied form of the beta-adrenergic and closely related receptors, probably inducing a desensitization of them. Key regulator of LPAR1 signaling. Competes with RALA for binding to LPAR1 thus affecting the signaling properties of the receptor. Desensitizes LPAR1 and LPAR2 in a phosphorylation-independent manner. Positively regulates ciliary smoothened (SMO)-dependent Hedgehog (Hh) signaling pathway by facilitating the trafficking of SMO into the cilium and the stimulation of SMO activity. Inhibits relaxation of airway smooth muscle in response to blue light. This chain is Beta-adrenergic receptor kinase 1, found in Mus musculus (Mouse).